Reading from the N-terminus, the 429-residue chain is Enolase (429 aa).

Gln-164 contributes to the (2R)-2-phosphoglycerate binding site. The active-site Proton donor is Glu-206. Residues Asp-243, Glu-286, and Asp-313 each coordinate Mg(2+). Residues Lys-338, Arg-367, Ser-368, and Lys-389 each contribute to the (2R)-2-phosphoglycerate site. Lys-338 functions as the Proton acceptor in the catalytic mechanism.

This sequence belongs to the enolase family. In terms of assembly, homooctamer. Forms a ring-shaped particle. Mg(2+) is required as a cofactor.

The protein resides in the cytoplasm. Its subcellular location is the secreted. The protein localises to the cell surface. It carries out the reaction (2R)-2-phosphoglycerate = phosphoenolpyruvate + H2O. The protein operates within carbohydrate degradation; glycolysis; pyruvate from D-glyceraldehyde 3-phosphate: step 4/5. Inhibited by fluoride and phosphate. In terms of biological role, catalyzes the reversible conversion of 2-phosphoglycerate (2-PG) into phosphoenolpyruvate (PEP). It is essential for the degradation of carbohydrates via glycolysis. This chain is Enolase, found in Thermotoga maritima (strain ATCC 43589 / DSM 3109 / JCM 10099 / NBRC 100826 / MSB8).